The following is a 354-amino-acid chain: MAGPLTVPWMPPHDPGTPALSVVDMHTGGEPLRIVLAGCPEVVGPTLLAKRRYMRQHLDHVRRRLMFEPRGHRDMYGAVLVPSELPDAHLGVLFLNNEGYSSMCGHAVLALGRFALDFGLVPAPPSDAQEALVNIHCPCGLVAAFVECEGCRSRGPVRFHSVPAFVLATDFLVDVPGRGKVVVDIAYGGAFYAFVSAEKLGLDVCSAKMGDLVAAASAVTEAVKAQFKISHPDSEDLAFLYGTILTDGKDTYNEEPTTNICVFADEQVDRSPTGSGVTARIALQYHKGLLELNQTRAFKSSATGSVFTGKAVREAKCGDFKAVIVEVSGQAHYTGTASFIVEDDDPLRDGFLLK.

Cysteine 104 acts as the Proton acceptor in catalysis. Substrate-binding positions include 105–106 (GH), aspartate 269, and 274–275 (GS).

This sequence belongs to the proline racemase family. As to quaternary structure, homodimer.

The catalysed reaction is trans-3-hydroxy-L-proline = 1-pyrroline-2-carboxylate + H2O. Catalyzes the dehydration of trans-3-hydroxy-L-proline to Delta(1)-pyrroline-2-carboxylate (Pyr2C). The chain is Trans-L-3-hydroxyproline dehydratase (L3HYPDH) from Bos taurus (Bovine).